Reading from the N-terminus, the 1025-residue chain is Exportin-T (1025 aa).

This sequence belongs to the exportin family.

Its subcellular location is the nucleus. The protein localises to the cytoplasm. TRNA nucleus export receptor which facilitates tRNA translocation across the nuclear pore complex. Involved in pre-tRNA splicing, probably by affecting the interaction of pre-tRNA with splicing endonuclease. In Candida albicans (strain SC5314 / ATCC MYA-2876) (Yeast), this protein is Exportin-T (LOS1).